We begin with the raw amino-acid sequence, 136 residues long: MARTKQTARKSTGGKAPRKQLATKAARKSAPATGGVKKPHRFRPGTVALREIRKYQKSTELLIRKLPFQRLVREIAQDFKTDLRFQSSAVAALQEAAEAYLVGLFEDTNLCAIHAKRVTIMPKDIQLARRIRGERA.

Residues 1-43 (MARTKQTARKSTGGKAPRKQLATKAARKSAPATGGVKKPHRFR) are disordered. 2 positions are modified to N6,N6,N6-trimethyllysine; alternate: K5 and K10. 2 positions are modified to N6,N6-dimethyllysine; alternate: K5 and K10. N6-methyllysine; alternate is present on residues K5 and K10. Position 10 is an N6-acetyllysine; alternate (K10). Position 11 is a phosphoserine (S11). A Phosphothreonine modification is found at T12. K15 is subject to N6-acetyllysine. An N6-methyllysine; alternate mark is found at K19, K24, and K28. N6-acetyllysine; alternate occurs at positions 19 and 24. The residue at position 28 (K28) is an N6,N6,N6-trimethyllysine; alternate. K28 carries the N6,N6-dimethyllysine; alternate modification. S29 is modified (phosphoserine). N6,N6,N6-trimethyllysine; alternate is present on K37. K37 is modified (N6,N6-dimethyllysine; alternate). N6-methyllysine; alternate is present on K37.

Belongs to the histone H3 family. In terms of assembly, the nucleosome is a histone octamer containing two molecules each of H2A, H2B, H3 and H4 assembled in one H3-H4 heterotetramer and two H2A-H2B heterodimers. The octamer wraps approximately 147 bp of DNA. Acetylation is generally linked to gene activation. Can be acetylated to form H3K9ac, H3K14ac, H3K18ac and H3K23ac. H3K9ac could compete with H3K9me and prevent gene silencing. H3K9ac is restricted to euchromatin. In terms of processing, methylated to form mainly H3K4me, H3K9me, H3K18me, H3K23me, H3K27me and H3K36me. H3K4me1/2/3, H3K9me3, H3K27me3 and H3K36me1/2/3 are typical marks for euchromatin, whereas heterochromatic chromocenters are enriched in H3K9me1/2 and H3K27me1/2. H2BK143ub1 is probably prerequisite for H3K4me. Post-translationally, can be phosphorylated to form H3S10ph, H3T11ph and H3S28ph.

The protein resides in the nucleus. Its subcellular location is the chromosome. Functionally, core component of nucleosome. Nucleosomes wrap and compact DNA into chromatin, limiting DNA accessibility to the cellular machineries which require DNA as a template. Histones thereby play a central role in transcription regulation, DNA repair, DNA replication and chromosomal stability. DNA accessibility is regulated via a complex set of post-translational modifications of histones, also called histone code, and nucleosome remodeling. The chain is Histone H3.2 from Brassica napus (Rape).